A 192-amino-acid chain; its full sequence is uncharacterized protein (192 aa).

Residues 17–73 (MLRGSGKKPIQRLAKAPAATASSKTSEWRATTAYGFLPAGGDVRPHSPRYESQGVLS) are disordered. The span at 30–41 (AKAPAATASSKT) shows a compositional bias: low complexity.

This is an uncharacterized protein from Sinorhizobium fredii (strain NBRC 101917 / NGR234).